The sequence spans 89 residues: Protein M7 (89 aa).

The N-terminal stretch at M1–S25 is a signal peptide. Disulfide bonds link C28-C65, C38-C54, C55-C80, and C67-C87.

Belongs to the A9/FIL1 family. In terms of tissue distribution, tapetum of anthers.

The protein localises to the secreted. The sequence is that of Protein M7 (M7) from Lilium henryi (Henry's lily).